We begin with the raw amino-acid sequence, 196 residues long: Transmembrane 4 L6 family member 5 (196 aa).

Residues 1–9 (MCTGKCARF) are Cytoplasmic-facing. The chain crosses the membrane as a helical span at residues 10–30 (VGLSLIPLSLVCIVANALLLV). At 31–45 (PNGQTTWTKDHLSLQ) the chain is on the extracellular side. Residues 46 to 66 (VWLMAGFVGGGLMVLCPGISA) traverse the membrane as a helical segment. Residues 67-89 (VRAGGKGCCGAGCCGNRCRMLRS) lie on the Cytoplasmic side of the membrane. The chain crosses the membrane as a helical span at residues 90 to 110 (VFCSAIGLLGAIYCLSVSGTG). Residues 90-196 (VFCSAIGLLG…DCRKKQGSSQ (107 aa)) form an interaction with MTOR and CASTOR1 region. Topologically, residues 111–156 (LRIGPQCLMNGSWDYHFQDTAGSYLLNRTQWNLCVEPPDVVLWNVT) are extracellular. The N-linked (GlcNAc...) asparagine glycan is linked to Asn120. An L-arginine-binding site is contributed by 123 to 128 (WDYHFQ). N-linked (GlcNAc...) asparagine glycans are attached at residues Asn137 and Asn154. A helical membrane pass occupies residues 157 to 177 (LFSLLVAASCLEILLCGVQLV). At 178–196 (NASIGVLCGDCRKKQGSSQ) the chain is on the cytoplasmic side.

This sequence belongs to the L6 tetraspanin family. Interacts with MTOR; the interaction is positively regulated by arginine and is negatively regulated by leucine. Interacts with SLC38A9. Interacts with SLC7A1; the interaction is negatively regulated by arginine. Interacts with CASTOR1; the interaction is positively regulated by leucine and is negatively regulated by arginine.

It is found in the lysosome membrane. The protein resides in the cell membrane. Functionally, acts as a lysosomal membrane arginine sensor. Forms a complex with MTOR and SLC38A9 on lysosomal membranes in an arginine-regulated manner, leading to arginine efflux which enables the activation of mTORC1 which subsequently leads to RPS6KB1 and EIF4EBP1 phosphorylations. Facilitates cell cycle G1/S phase progression and the translocation of the CDK4-CCND1 complex into the nucleus. CDKN1B and RHOA/ROCK signaling activity are involved in TM4SF5-mediated acceleration of G1/S phase progression. This Bos taurus (Bovine) protein is Transmembrane 4 L6 family member 5 (TM4SF5).